Consider the following 490-residue polypeptide: Kinetochore protein Nuf2 homolog (490 aa).

Coiled-coil stretches lie at residues 146-280 and 310-407; these read DRKF…KLEA and DLID…SETI. Disordered stretches follow at residues 346–365 and 468–490; these read QSET…EERQ and IDAG…SVFK.

The protein belongs to the NUF2 family. Component of the NDC80 complex, which is composed of at least ndc-80 and him-10. The NDC80 complex interacts with knl-1.

It localises to the nucleus. The protein resides in the chromosome. The protein localises to the centromere. It is found in the kinetochore. Acts as a component of the essential kinetochore-associated NDC80 complex, which is required for chromosome segregation in mitosis and meiosis and spindle checkpoint activity. The ndc-80 complex synergistically enhances the affinity of the ska-1 complex for microtubules and may allow the ndc-80 complex to track depolymerizing microtubules. This Caenorhabditis elegans protein is Kinetochore protein Nuf2 homolog (him-10).